The chain runs to 190 residues: Probable gluconokinase (190 aa).

Residue 7–14 (GVSGSGKT) coordinates ATP.

This sequence belongs to the gluconokinase GntK/GntV family.

The catalysed reaction is D-gluconate + ATP = 6-phospho-D-gluconate + ADP + H(+). It participates in carbohydrate acid metabolism; D-gluconate degradation. This Xenopus tropicalis (Western clawed frog) protein is Probable gluconokinase (idnk).